Consider the following 203-residue polypeptide: ATP-dependent Clp protease proteolytic subunit (203 aa).

S107 (nucleophile) is an active-site residue. H132 is a catalytic residue.

Belongs to the peptidase S14 family. In terms of assembly, fourteen ClpP subunits assemble into 2 heptameric rings which stack back to back to give a disk-like structure with a central cavity, resembling the structure of eukaryotic proteasomes.

The protein resides in the cytoplasm. It carries out the reaction Hydrolysis of proteins to small peptides in the presence of ATP and magnesium. alpha-casein is the usual test substrate. In the absence of ATP, only oligopeptides shorter than five residues are hydrolyzed (such as succinyl-Leu-Tyr-|-NHMec, and Leu-Tyr-Leu-|-Tyr-Trp, in which cleavage of the -Tyr-|-Leu- and -Tyr-|-Trp bonds also occurs).. In terms of biological role, cleaves peptides in various proteins in a process that requires ATP hydrolysis. Has a chymotrypsin-like activity. Plays a major role in the degradation of misfolded proteins. The polypeptide is ATP-dependent Clp protease proteolytic subunit (Shewanella pealeana (strain ATCC 700345 / ANG-SQ1)).